Consider the following 224-residue polypeptide: Large ribosomal subunit protein uL1c (224 aa).

This sequence belongs to the universal ribosomal protein uL1 family. Part of the 50S ribosomal subunit.

It localises to the plastid. The protein resides in the chloroplast. Its function is as follows. Binds directly to 23S rRNA. Might be involved in E site tRNA release (Potential). In Cyanidioschyzon merolae (strain NIES-3377 / 10D) (Unicellular red alga), this protein is Large ribosomal subunit protein uL1c (rpl1).